A 334-amino-acid polypeptide reads, in one-letter code: uncharacterized protein (334 aa).

The protein belongs to the MG414/MG415 family.

This is an uncharacterized protein from Mycoplasma pneumoniae (strain ATCC 29342 / M129 / Subtype 1) (Mycoplasmoides pneumoniae).